Consider the following 721-residue polypeptide: BBSome complex member bbs-7 (721 aa).

Part of BBSome complex, that contains at least bbs-1, bbs-2, bbs-4, bbs-5, osm-12, bbs-8/ttc-8 and bbs-9. Interacts with bbs-1. In terms of tissue distribution, expressed in ciliated cells including amphid and both inner and outer labial neurons of the head and in both phasmid neurons PHA and PHB in the tail at larval stages L1 and L2.

The protein localises to the cell projection. The protein resides in the cilium. It localises to the cytoplasm. It is found in the cytoskeleton. Its subcellular location is the cilium basal body. The protein localises to the cilium axoneme. Functionally, component of the BBSome complex. The BBSome complex is thought to function as a coat complex required for sorting of specific membrane proteins to the primary cilia. The BBSome complex is required for ciliogenesis but is dispensable for centriolar satellite function. Required for proper BBSome complex assembly and its ciliary localization. Required for cilia biogenesis and both the assembly and movement of intraflagellar transport proteins along the ciliary axoneme. Plays a role in the removal of degraded mechanosensory receptors within the cilia. Plays a role in guanylyl cyclase localization in the ring-like structures at the base of the finger compartment in AFD sensory neurons. In ciliated sensory neurons, required for the sensation of nitric oxide and avoidance of NO-producing organisms like P.aeruginosa. The chain is BBSome complex member bbs-7 from Caenorhabditis elegans.